Reading from the N-terminus, the 316-residue chain is Ribosomal RNA small subunit methyltransferase H (316 aa).

Residues 35–37 (SGH), D55, F84, D105, and Q112 each bind S-adenosyl-L-methionine.

This sequence belongs to the methyltransferase superfamily. RsmH family.

The protein resides in the cytoplasm. The enzyme catalyses cytidine(1402) in 16S rRNA + S-adenosyl-L-methionine = N(4)-methylcytidine(1402) in 16S rRNA + S-adenosyl-L-homocysteine + H(+). Functionally, specifically methylates the N4 position of cytidine in position 1402 (C1402) of 16S rRNA. The sequence is that of Ribosomal RNA small subunit methyltransferase H from Streptococcus pyogenes serotype M4 (strain MGAS10750).